A 553-amino-acid chain; its full sequence is Heterochromatin protein 1-binding protein 3 (553 aa).

Ala2 carries the N-acetylalanine modification. Ser6 bears the Phosphoserine mark. 2 disordered regions span residues 29-134 (KLGE…KTIP) and 140-159 (SASQLARAQKQTPMASSPRP). Position 51 is a phosphothreonine (Thr51). Over residues 60 to 71 (GEEEKPEPDISS) the composition is skewed to acidic residues. Residue Lys64 forms a Glycyl lysine isopeptide (Lys-Gly) (interchain with G-Cter in SUMO2) linkage. The residue at position 85 (Thr85) is a Phosphothreonine. The segment covering 94–127 (EQPKGEPENEEKEENKSSEETKKDEKDQSKEKEK) has biased composition (basic and acidic residues). Residue Lys97 forms a Glycyl lysine isopeptide (Lys-Gly) (interchain with G-Cter in SUMO2) linkage. The span at 140–154 (SASQLARAQKQTPMA) shows a compositional bias: polar residues. Phosphoserine is present on residues Ser142, Ser155, and Ser156. Positions 157-232 (PRPKMDAILT…GASGSFVVVQ (76 aa)) constitute an H15 1 domain. Position 190 is an N6-acetyllysine (Lys190). The disordered stretch occupies residues 230–255 (VVQKSRKTPQKSRNRKNRSSAVDPEP). Positions 233 to 247 (KSRKTPQKSRNRKNR) are enriched in basic residues. Phosphoserine is present on residues Ser248 and Ser249. The short motif at 255 to 259 (PQVKL) is the PxVxL motif element. 2 consecutive H15 domains span residues 255–330 (PQVK…QLKK) and 337–413 (LGGS…QLCF). Residue Lys258 forms a Glycyl lysine isopeptide (Lys-Gly) (interchain with G-Cter in SUMO2) linkage. A disordered region spans residues 422 to 553 (LFPKKEPDDS…TMKKSFRVKK (132 aa)). Positions 430–450 (DSRDEDEDEDESSEEDSEDEE) are enriched in acidic residues. Ser441, Ser442, and Ser446 each carry phosphoserine. The segment covering 489-510 (GKARPLPKKAPPKAKTPAKKTR) has biased composition (basic residues). The segment covering 517-527 (KKPSGGSSKKP) has biased composition (low complexity). A compositionally biased stretch (basic residues) spans 543–553 (STMKKSFRVKK).

In terms of assembly, interacts (via PxVxL motif) with CBX5 (via Trp-174).

It is found in the nucleus. The protein resides in the chromosome. Functionally, component of heterochromatin that maintains heterochromatin integrity during G1/S progression and regulates the duration of G1 phase to critically influence cell proliferative capacity. Mediates chromatin condensation during hypoxia, leading to increased tumor cell viability, radio-resistance, chemo-resistance and self-renewal. In Homo sapiens (Human), this protein is Heterochromatin protein 1-binding protein 3 (HP1BP3).